The primary structure comprises 501 residues: Glucose-6-phosphate isomerase (501 aa).

The disordered stretch occupies residues 78–101; sequence GIANPTENRAAEHSAERGDGAPES. Residues 86–97 show a composition bias toward basic and acidic residues; it reads RAAEHSAERGDG. The Proton donor role is filled by E333. Residues H364 and K474 contribute to the active site.

This sequence belongs to the GPI family.

Its subcellular location is the cytoplasm. The catalysed reaction is alpha-D-glucose 6-phosphate = beta-D-fructose 6-phosphate. Its pathway is carbohydrate biosynthesis; gluconeogenesis. It functions in the pathway carbohydrate degradation; glycolysis; D-glyceraldehyde 3-phosphate and glycerone phosphate from D-glucose: step 2/4. Its function is as follows. Catalyzes the reversible isomerization of glucose-6-phosphate to fructose-6-phosphate. In Sphingopyxis alaskensis (strain DSM 13593 / LMG 18877 / RB2256) (Sphingomonas alaskensis), this protein is Glucose-6-phosphate isomerase.